The chain runs to 37 residues: Large ribosomal subunit protein bL36 (37 aa).

Belongs to the bacterial ribosomal protein bL36 family.

The chain is Large ribosomal subunit protein bL36 (rpmJ) from Oleidesulfovibrio alaskensis (strain ATCC BAA-1058 / DSM 17464 / G20) (Desulfovibrio alaskensis).